The primary structure comprises 398 residues: Thyrotropin-releasing hormone receptor (398 aa).

The Extracellular portion of the chain corresponds to 1–28 (MENETVSELNQTQLQPRAVVALEYQVVT). N-linked (GlcNAc...) asparagine glycosylation is found at N3 and N10. The chain crosses the membrane as a helical span at residues 29-51 (ILLVLIICGLGIVGNIMVVLVVM). Residues 52-61 (RTKHMRTPTN) lie on the Cytoplasmic side of the membrane. Residues 62–83 (CYLVSLAVADLMVLVAAGLPNI) traverse the membrane as a helical segment. Over 84–99 (TDSIYGSWVYGYVGCL) the chain is Extracellular. Residues C98 and C179 are joined by a disulfide bond. A helical transmembrane segment spans residues 100–121 (CITYLQYLGINASSCSITAFTI). Topologically, residues 122–144 (ERYIAICHPIKAQFLCTFSRAKK) are cytoplasmic. The chain crosses the membrane as a helical span at residues 145–168 (IIIFVWAFTSLYCMLWFFLLDLNI). Over 169–193 (STYKDAIVISCGYKISRNYYSPIYL) the chain is Extracellular. The chain crosses the membrane as a helical span at residues 194-215 (MDFGVFYVVPMILATVLYGFIA). Residues 216-266 (RILFLNPIPSDPKENSKTWKNDSTHQNTNLNVNTSNRCFNSTVSSRKQVTK) are Cytoplasmic-facing. Residues 267–288 (MLAVVVILFALLWMPYRTLVVV) form a helical membrane-spanning segment. Topologically, residues 289–296 (NSFLSSPF) are extracellular. A helical membrane pass occupies residues 297–319 (QENWFLLFCRICIYLNSAINPVI). Over 320–398 (YNLMSQKFRA…LASEVSFSQS (79 aa)) the chain is Cytoplasmic.

The protein belongs to the G-protein coupled receptor 1 family.

It is found in the cell membrane. Receptor for thyrotropin-releasing hormone (TRH). Upon ligand binding, this G-protein-coupled receptor triggers activation of the phosphatidylinositol (IP3)-calcium-protein kinase C (PKC) pathway. The protein is Thyrotropin-releasing hormone receptor (TRHR) of Homo sapiens (Human).